A 460-amino-acid polypeptide reads, in one-letter code: Probable Xaa-Pro aminopeptidase PEPP (460 aa).

The Mn(2+) site is built by aspartate 256, aspartate 267, glutamate 390, and glutamate 430.

This sequence belongs to the peptidase M24B family. The cofactor is Mn(2+).

It catalyses the reaction Release of any N-terminal amino acid, including proline, that is linked to proline, even from a dipeptide or tripeptide.. Its function is as follows. Catalyzes the removal of a penultimate prolyl residue from the N-termini of peptides. The chain is Probable Xaa-Pro aminopeptidase PEPP (PEPP) from Podospora anserina (strain S / ATCC MYA-4624 / DSM 980 / FGSC 10383) (Pleurage anserina).